The chain runs to 105 residues: Phosphoribosyl-AMP cyclohydrolase (105 aa).

D72 is a Mg(2+) binding site. C73 lines the Zn(2+) pocket. Mg(2+)-binding residues include D74 and D76. Positions 89 and 96 each coordinate Zn(2+).

The protein belongs to the PRA-CH family. As to quaternary structure, homodimer. Mg(2+) serves as cofactor. Zn(2+) is required as a cofactor.

It localises to the cytoplasm. It carries out the reaction 1-(5-phospho-beta-D-ribosyl)-5'-AMP + H2O = 1-(5-phospho-beta-D-ribosyl)-5-[(5-phospho-beta-D-ribosylamino)methylideneamino]imidazole-4-carboxamide. It functions in the pathway amino-acid biosynthesis; L-histidine biosynthesis; L-histidine from 5-phospho-alpha-D-ribose 1-diphosphate: step 3/9. Its function is as follows. Catalyzes the hydrolysis of the adenine ring of phosphoribosyl-AMP. The sequence is that of Phosphoribosyl-AMP cyclohydrolase from Listeria monocytogenes serovar 1/2a (strain ATCC BAA-679 / EGD-e).